Reading from the N-terminus, the 67-residue chain is Conotoxin ArMLKM-01 (67 aa).

An N-terminal signal peptide occupies residues 1 to 24 (MLKMEVVLFTFLVLFPLSTLQLET). A propeptide spanning residues 25-51 (DQPVERYVENKQDLNPDESRNFMLPIV) is cleaved from the precursor. 3 disulfides stabilise this stretch: cysteine 54-cysteine 65, cysteine 55-cysteine 63, and cysteine 58-cysteine 66.

The protein belongs to the conotoxin M superfamily. As to expression, expressed by the venom duct.

Its subcellular location is the secreted. The sequence is that of Conotoxin ArMLKM-01 from Conus arenatus (Sand-dusted cone).